We begin with the raw amino-acid sequence, 528 residues long: U3 small nucleolar RNA-associated protein 15 homolog (528 aa).

Ala2 is modified (N-acetylalanine). WD repeat units follow at residues 36 to 75, 78 to 117, 120 to 159, 162 to 202, 204 to 242, 246 to 285, and 287 to 326; these read KEFG…PVKT, RFKD…PLRQ, GHTK…EILT, EHSD…NVLC, EHGQ…QLLV, NHHK…VVHS, and DYAA…KKTS. Lys249 participates in a covalent cross-link: Glycyl lysine isopeptide (Lys-Gly) (interchain with G-Cter in SUMO2). The segment at 496–528 is disordered; it reads RNDSDPVPEHVPAELPEEKTESPTQPSDTDKNS. The segment covering 497-516 has biased composition (basic and acidic residues); sequence NDSDPVPEHVPAELPEEKTE.

In terms of assembly, part of the small subunit (SSU) processome, composed of more than 70 proteins and the RNA chaperone small nucleolar RNA (snoRNA) U3. May be a component of the proposed t-UTP subcomplex of the ribosomal small subunit (SSU) processome containing at least UTP4, WDR43, HEATR1, UTP15, WDR75. Interacts directly with UTP4 and WDR43.

The protein resides in the nucleus. Its subcellular location is the nucleolus. Ribosome biogenesis factor. Involved in nucleolar processing of pre-18S ribosomal RNA. Required for optimal pre-ribosomal RNA transcription by RNA polymerase I. Part of the small subunit (SSU) processome, first precursor of the small eukaryotic ribosomal subunit. During the assembly of the SSU processome in the nucleolus, many ribosome biogenesis factors, an RNA chaperone and ribosomal proteins associate with the nascent pre-rRNA and work in concert to generate RNA folding, modifications, rearrangements and cleavage as well as targeted degradation of pre-ribosomal RNA by the RNA exosome. The polypeptide is U3 small nucleolar RNA-associated protein 15 homolog (Utp15) (Mus musculus (Mouse)).